The chain runs to 274 residues: MGTDSRAAKALLARARTLHLQTGNLLNWGRLRKKCPSTHSEELHDCIQKTLNEWSSQINPDLVREFPDVLECTVSHAVEKINPDEREEMKVSAKLFIVESNSSSSTRSAVDMACSVLGVAQLDSVIIASPPIEDGVNLSLEHLQPYWEELENLVQSKKIVAIGTSDLDKTQLEQLYQWAQVKPNSNQVNLASCCVMPPDLTAFAKQFDIQLLTHNDPKELLSEASFQEALQESIPDIQAHEWVPLWLLRYSVIVKSRGIIKSKGYILQAKRRGS.

K263 is subject to N6-acetyllysine.

This sequence belongs to the aldo/keto reductase family. Glutamate--cysteine ligase light chain subfamily. In terms of assembly, heterodimer of a catalytic heavy chain and a regulatory light chain. In all tissues examined. Highest levels in skeletal muscle.

It participates in sulfur metabolism; glutathione biosynthesis; glutathione from L-cysteine and L-glutamate: step 1/2. This chain is Glutamate--cysteine ligase regulatory subunit (GCLM), found in Homo sapiens (Human).